Consider the following 241-residue polypeptide: Major prion protein (241 aa).

Positions 1 to 15 (MLVLFVATWSDLGLC) are cleaved as a signal peptide. An interaction with ADGRG6 region spans residues 16–31 (KKRPKPGGWNTGGSRY). Residues 16-223 (KKRPKPGGWN…ESQAYYQRGS (208 aa)) are interaction with GRB2, ERI3 and SYN1. The disordered stretch occupies residues 18–101 (RPKPGGWNTG…WHKPNKPKTS (84 aa)). 5 repeat units span residues 44–52 (PQGGGGWGQ), 53–60 (PHGGGWGQ), 61–68 (PHGGGWGQ), 69–76 (PHGGGWGQ), and 77–84 (PHGGGWGQ). The interval 44 to 84 (PQGGGGWGQPHGGGWGQPHGGGWGQPHGGGWGQPHGGGWGQ) is 5 X 8 AA tandem repeats of P-H-G-G-G-W-G-Q. The segment covering 45-88 (QGGGGWGQPHGGGWGQPHGGGWGQPHGGGWGQPHGGGWGQGGGT) has biased composition (gly residues). Positions 54, 55, 56, 62, 63, 64, 70, 71, 72, 78, 79, and 80 each coordinate Cu(2+). The segment covering 91–101 (QWHKPNKPKTS) has biased composition (basic residues). Residues C172 and C207 are joined by a disulfide bond. N-linked (GlcNAc...) asparagine glycans are attached at residues N174 and N190. Residue S223 is the site of GPI-anchor amidated serine attachment. The propeptide at 224–241 (SMVLFSSPPVILLISFLI) is removed in mature form.

The protein belongs to the prion family. Monomer and homodimer. Has a tendency to aggregate into amyloid fibrils containing a cross-beta spine, formed by a steric zipper of superposed beta-strands. Soluble oligomers may represent an intermediate stage on the path to fibril formation. Copper binding may promote oligomerization. Interacts with GRB2, APP, ERI3/PRNPIP and SYN1. Mislocalized cytosolically exposed PrP interacts with MGRN1; this interaction alters MGRN1 subcellular location and causes lysosomal enlargement. Interacts with APP. Interacts with KIAA1191. Interacts with ADGRG6.

It localises to the cell membrane. The protein localises to the golgi apparatus. In terms of biological role, its primary physiological function is unclear. May play a role in neuronal development and synaptic plasticity. May be required for neuronal myelin sheath maintenance. May promote myelin homeostasis through acting as an agonist for ADGRG6 receptor. May play a role in iron uptake and iron homeostasis. Soluble oligomers are toxic to cultured neuroblastoma cells and induce apoptosis (in vitro). Association with GPC1 (via its heparan sulfate chains) targets PRNP to lipid rafts. Also provides Cu(2+) or Zn(2+) for the ascorbate-mediated GPC1 deaminase degradation of its heparan sulfate side chains. This is Major prion protein (PRNP) from Mandrillus sphinx (Mandrill).